A 248-amino-acid chain; its full sequence is tRNA pseudouridine synthase A (248 aa).

Asp-52 serves as the catalytic Nucleophile. Substrate is bound at residue Tyr-113.

The protein belongs to the tRNA pseudouridine synthase TruA family. In terms of assembly, homodimer.

It catalyses the reaction uridine(38/39/40) in tRNA = pseudouridine(38/39/40) in tRNA. In terms of biological role, formation of pseudouridine at positions 38, 39 and 40 in the anticodon stem and loop of transfer RNAs. The chain is tRNA pseudouridine synthase A from Mesorhizobium japonicum (strain LMG 29417 / CECT 9101 / MAFF 303099) (Mesorhizobium loti (strain MAFF 303099)).